The following is a 184-amino-acid chain: UPF0398 protein BAA_1648 (184 aa).

The protein belongs to the UPF0398 family.

This chain is UPF0398 protein BAA_1648, found in Bacillus anthracis (strain A0248).